We begin with the raw amino-acid sequence, 317 residues long: Mitochondrial thiamine pyrophosphate carrier 1 (317 aa).

3 Solcar repeats span residues glycine 12 to valine 110, proline 120 to valine 206, and proline 214 to leucine 309. Transmembrane regions (helical) follow at residues valine 17–leucine 35, leucine 91–threonine 107, phenylalanine 126–leucine 146, glycine 181–alanine 198, alanine 220–valine 240, and glycine 284–tryptophan 301.

This sequence belongs to the mitochondrial carrier (TC 2.A.29) family.

It localises to the mitochondrion inner membrane. Functionally, mitochondrial transporter that mediates uptake of thiamine pyrophosphate (ThPP) into mitochondria. In Neosartorya fischeri (strain ATCC 1020 / DSM 3700 / CBS 544.65 / FGSC A1164 / JCM 1740 / NRRL 181 / WB 181) (Aspergillus fischerianus), this protein is Mitochondrial thiamine pyrophosphate carrier 1 (tpc1).